A 154-amino-acid polypeptide reads, in one-letter code: Dau c 1 isoallergen Dau c 1.0301 (154 aa).

This sequence belongs to the BetVI family. As to expression, expressed in roots.

The polypeptide is Dau c 1 isoallergen Dau c 1.0301 (Daucus carota (Wild carrot)).